The following is a 73-amino-acid chain: Protein SlyX homolog (73 aa).

This sequence belongs to the SlyX family.

The polypeptide is Protein SlyX homolog (Histophilus somni (strain 129Pt) (Haemophilus somnus)).